The following is a 322-amino-acid chain: tRNA U34 carboxymethyltransferase (322 aa).

Carboxy-S-adenosyl-L-methionine is bound by residues K91, W105, K110, G129, M195, Y199, and R314.

It belongs to the class I-like SAM-binding methyltransferase superfamily. CmoB family. As to quaternary structure, homotetramer.

The enzyme catalyses carboxy-S-adenosyl-L-methionine + 5-hydroxyuridine(34) in tRNA = 5-carboxymethoxyuridine(34) in tRNA + S-adenosyl-L-homocysteine + H(+). Catalyzes carboxymethyl transfer from carboxy-S-adenosyl-L-methionine (Cx-SAM) to 5-hydroxyuridine (ho5U) to form 5-carboxymethoxyuridine (cmo5U) at position 34 in tRNAs. The chain is tRNA U34 carboxymethyltransferase from Ectopseudomonas mendocina (strain ymp) (Pseudomonas mendocina).